Here is a 381-residue protein sequence, read N- to C-terminus: 2-epi-5-epi-valiolone synthase (381 aa).

NAD(+) contacts are provided by residues Asp-50, 81–84 (EEAK), 114–118 (GIVLD), 138–139 (TS), Lys-151, Lys-160, and 178–181 (FLDT). Lys-151 is an active-site residue. Positions 193, 264, and 280 each coordinate a divalent metal cation.

The protein belongs to the sugar phosphate cyclases superfamily. EEVS family. NAD(+) serves as cofactor. Co(2+) is required as a cofactor.

The enzyme catalyses D-sedoheptulose 7-phosphate = 2-epi-5-epi-valiolone + phosphate. The protein operates within antibiotic biosynthesis. In terms of biological role, catalyzes the cyclization of D-sedoheptulose 7-phosphate to 2-epi-5-epi-valiolone. Involved in cetoniacytone A biosynthesis. The protein is 2-epi-5-epi-valiolone synthase of Actinomyces sp.